A 288-amino-acid polypeptide reads, in one-letter code: Homoserine kinase (288 aa).

79 to 89 (PPARGLGSSSA) is an ATP binding site.

This sequence belongs to the GHMP kinase family. Homoserine kinase subfamily.

The protein localises to the cytoplasm. It carries out the reaction L-homoserine + ATP = O-phospho-L-homoserine + ADP + H(+). Its pathway is amino-acid biosynthesis; L-threonine biosynthesis; L-threonine from L-aspartate: step 4/5. Its function is as follows. Catalyzes the ATP-dependent phosphorylation of L-homoserine to L-homoserine phosphate. This is Homoserine kinase from Listeria monocytogenes serotype 4a (strain HCC23).